The primary structure comprises 127 residues: Gamma-synuclein (127 aa).

A run of 2 repeats spans residues 20 to 30 (EKTKQGVTEAA) and 31 to 41 (EKTKEGVMYVG). Residues 20-67 (EKTKQGVTEAAEKTKEGVMYVGAKTKENVVQSVTSVAEKTKEQANAVS) form a 4 X 11 AA tandem repeats of [EGSA]-K-T-K-[EQ]-[GQ]-V-X(4) region. A 3; approximate repeat occupies 42–56 (AKTKENVVQSVTSVA). Repeat unit 4 spans residues 57 to 67 (EKTKEQANAVS). Phosphoserine occurs at positions 67 and 72. The disordered stretch occupies residues 96 to 127 (RKEDLRPSAPQQEGEASKEKEEVAEEAQSGGD). The residue at position 124 (serine 124) is a Phosphoserine; by BARK1, CaMK2 and CK2.

It belongs to the synuclein family. As to quaternary structure, may be a centrosome-associated protein. Interacts with MYOC; affects its secretion and its aggregation. Post-translationally, phosphorylated. Phosphorylation by GRK5 appears to occur on residues distinct from the residue phosphorylated by other kinases. As to expression, highly expressed in brain, particularly in the substantia nigra. Also expressed in the corpus callosum, heart, skeletal muscle, ovary, testis, colon and spleen. Weak expression in pancreas, kidney and lung.

It localises to the cytoplasm. The protein localises to the perinuclear region. Its subcellular location is the cytoskeleton. It is found in the microtubule organizing center. The protein resides in the centrosome. It localises to the spindle. Plays a role in neurofilament network integrity. May be involved in modulating axonal architecture during development and in the adult. In vitro, increases the susceptibility of neurofilament-H to calcium-dependent proteases. May also function in modulating the keratin network in skin. Activates the MAPK and Elk-1 signal transduction pathway. The protein is Gamma-synuclein (SNCG) of Homo sapiens (Human).